The following is a 226-amino-acid chain: Flagellar L-ring protein (226 aa).

Positions Met1–Gly15 are cleaved as a signal peptide. The N-palmitoyl cysteine moiety is linked to residue Cys16. Residue Cys16 is the site of S-diacylglycerol cysteine attachment.

Belongs to the FlgH family. The basal body constitutes a major portion of the flagellar organelle and consists of four rings (L,P,S, and M) mounted on a central rod.

The protein localises to the cell outer membrane. It localises to the bacterial flagellum basal body. Functionally, assembles around the rod to form the L-ring and probably protects the motor/basal body from shearing forces during rotation. In Alteromonas mediterranea (strain DSM 17117 / CIP 110805 / LMG 28347 / Deep ecotype), this protein is Flagellar L-ring protein.